We begin with the raw amino-acid sequence, 346 residues long: Membrane progestin receptor alpha (346 aa).

Over 1–72 (MAMAQKLSHL…RTLFQQHNEA (72 aa)) the chain is Cytoplasmic. The helical transmembrane segment at 73–93 (VNVWTHLLAALVLLLRLALFV) threads the bilayer. The Extracellular portion of the chain corresponds to 94–103 (ETVDFWGDPH). Residues 104 to 124 (ALPLFIIVLASFTYLSFSALA) traverse the membrane as a helical segment. The Cytoplasmic segment spans residues 125–137 (HLLQAKSEFWHYS). A helical membrane pass occupies residues 138 to 158 (FFFLDYVGVAVYQFGSALAHF). At 159-169 (YYAIEPAWHAQ) the chain is on the extracellular side. Residues 170–190 (VQAVFLPMAAFLAWLSCIGSC) form a helical membrane-spanning segment. Over 191–237 (YNKYIQKPGLLGRTCQEVPSVLAYALDISPVVHRIFVSSDPTTDDPA) the chain is Cytoplasmic. Residues 238-258 (LLYHKCQVVFFLLAAAFFSTF) form a helical membrane-spanning segment. The Extracellular portion of the chain corresponds to 259 to 276 (MPERWFPGSCHVFGQGHQ). The chain crosses the membrane as a helical span at residues 277-297 (LFHIFLVLCTLAQLEAVALDY). Residues 298 to 316 (EARRPIYEPLHTHWPHNFS) are Cytoplasmic-facing. The helical transmembrane segment at 317 to 337 (GLFLLTVGSSILTAFLLSQLV) threads the bilayer. The Extracellular portion of the chain corresponds to 338–346 (QRKLDQKTK).

The protein belongs to the ADIPOR family. Expressed in a wide range of tissues including ovary, testis, placenta, uterus and bladder.

It is found in the cell membrane. Its function is as follows. Plasma membrane progesterone (P4) receptor coupled to G proteins. Seems to act through a G(i) mediated pathway. May be involved in oocyte maturation. Involved in neurosteroid inhibition of apoptosis. Also binds dehydroepiandrosterone (DHEA), pregnanolone, pregnenolone and allopregnanolone. In Homo sapiens (Human), this protein is Membrane progestin receptor alpha.